The chain runs to 111 residues: UPF0145 protein BTH_I2656 (111 aa).

Belongs to the UPF0145 family.

The polypeptide is UPF0145 protein BTH_I2656 (Burkholderia thailandensis (strain ATCC 700388 / DSM 13276 / CCUG 48851 / CIP 106301 / E264)).